The primary structure comprises 59 residues: Large ribosomal subunit protein bL32 (59 aa).

The interval 1–28 (MAVQQNKKSPSKRGMHRAHDFLTDPPLA) is disordered.

Belongs to the bacterial ribosomal protein bL32 family.

The sequence is that of Large ribosomal subunit protein bL32 from Aromatoleum aromaticum (strain DSM 19018 / LMG 30748 / EbN1) (Azoarcus sp. (strain EbN1)).